Reading from the N-terminus, the 201-residue chain is Ribosome maturation factor RimP (201 aa).

The protein belongs to the RimP family.

It is found in the cytoplasm. In terms of biological role, required for maturation of 30S ribosomal subunits. The protein is Ribosome maturation factor RimP of Acidobacterium capsulatum (strain ATCC 51196 / DSM 11244 / BCRC 80197 / JCM 7670 / NBRC 15755 / NCIMB 13165 / 161).